A 158-amino-acid chain; its full sequence is MSKTPRKSAASPSLQLGQAVEWPDRPEAAKLDRVPNPQKDTHFLARFTAPEFTSLCPVTGQPDFAHLVIDYVPGPWLLESKSLKLYLASFRNHGAFHEDCTVAIGKRIATEIKPKWLRIGGYWYPRGGIPIDVFWQTGKLPKDVWVPDQGVQPYRGRG.

Residue C56 is the Thioimide intermediate of the active site. The Proton donor role is filled by D63. Substrate contacts are provided by residues 78–80 (LES) and 97–98 (HE).

It belongs to the GTP cyclohydrolase I family. QueF type 1 subfamily.

It localises to the cytoplasm. The catalysed reaction is 7-aminomethyl-7-carbaguanine + 2 NADP(+) = 7-cyano-7-deazaguanine + 2 NADPH + 3 H(+). It functions in the pathway tRNA modification; tRNA-queuosine biosynthesis. Catalyzes the NADPH-dependent reduction of 7-cyano-7-deazaguanine (preQ0) to 7-aminomethyl-7-deazaguanine (preQ1). In Rhodopseudomonas palustris (strain TIE-1), this protein is NADPH-dependent 7-cyano-7-deazaguanine reductase.